Reading from the N-terminus, the 319-residue chain is Methionyl-tRNA formyltransferase (319 aa).

114–117 (SLLP) is a binding site for (6S)-5,6,7,8-tetrahydrofolate.

The protein belongs to the Fmt family.

It carries out the reaction L-methionyl-tRNA(fMet) + (6R)-10-formyltetrahydrofolate = N-formyl-L-methionyl-tRNA(fMet) + (6S)-5,6,7,8-tetrahydrofolate + H(+). Its function is as follows. Attaches a formyl group to the free amino group of methionyl-tRNA(fMet). The formyl group appears to play a dual role in the initiator identity of N-formylmethionyl-tRNA by promoting its recognition by IF2 and preventing the misappropriation of this tRNA by the elongation apparatus. In Acinetobacter baylyi (strain ATCC 33305 / BD413 / ADP1), this protein is Methionyl-tRNA formyltransferase.